The chain runs to 499 residues: Alpha-L-arabinofuranosidase B (499 aa).

An N-terminal signal peptide occupies residues 1–18 (MFSRRNLVALGLAATVSA). 2 N-linked (GlcNAc...) asparagine glycosylation sites follow: Asn-83 and Asn-202.

The protein belongs to the glycosyl hydrolase 54 family.

It carries out the reaction Hydrolysis of terminal non-reducing alpha-L-arabinofuranoside residues in alpha-L-arabinosides.. Its pathway is glycan metabolism; L-arabinan degradation. Able to hydrolyze 1,5-, 1,3- and 1,2-alpha-linkages not only in L-arabinofuranosyl oligosaccharides, but also in polysac-charides containing terminal non-reducing L-arabinofuranoses in side chains, like L-arabinan, arabinogalactan and arabinoxylan. The protein is Alpha-L-arabinofuranosidase B (abfB) of Aspergillus niger.